Reading from the N-terminus, the 20-residue chain is Hemocyanin subunit II (20 aa).

Residues 1–20 are disordered; that stretch reads DVVASSTAHKQQDINHLLDK. Residues 10–20 are compositionally biased toward basic and acidic residues; sequence KQQDINHLLDK.

This sequence belongs to the tyrosinase family. Hemocyanin subfamily. As to quaternary structure, composed of 3 major subunits (IB, II and III) and 1 minor subunit (IA) which form homohexamers and heterohexamers. May also form larger structures. As to expression, hemolymph.

It localises to the secreted. Its subcellular location is the extracellular space. In terms of biological role, hemocyanins are copper-containing oxygen carriers occurring freely dissolved in the hemolymph of many mollusks and arthropods. The protein is Hemocyanin subunit II of Panulirus japonicus (Japanese spiny lobster).